A 175-amino-acid polypeptide reads, in one-letter code: Cuticle protein 16.5, isoform B (175 aa).

19 tandem repeats follow at residues 17 to 20 (AAPA), 25 to 28 (AAPA), 31 to 34 (AAPA), 38 to 41 (AAPA), 44 to 47 (AAPA), 51 to 54 (AAPA), 57 to 60 (AAPA), 64 to 67 (AAPA), 70 to 73 (AAPA), 77 to 80 (AAPA), 83 to 86 (AAPA), 91 to 94 (AAPA), 99 to 102 (AAPA), 106 to 109 (AAPA), 134 to 137 (AAPA), 144 to 147 (AAPA), 151 to 154 (AAPA), 158 to 161 (AAPA), and 165 to 168 (AAPA).

Component of the cuticle of migratory locust which contains more than 100 different structural proteins. This is Cuticle protein 16.5, isoform B from Locusta migratoria (Migratory locust).